Consider the following 487-residue polypeptide: Glutamyl-tRNA(Gln) amidotransferase subunit A (487 aa).

Residue Lys-78 is the Charge relay system of the active site. Polar residues predominate over residues 135 to 144; sequence SAYQTTTNPW. Residues 135–155 are disordered; it reads SAYQTTTNPWDASRVPGGSSG. Residue Ser-153 is the Charge relay system of the active site. Ser-177 acts as the Acyl-ester intermediate in catalysis.

Belongs to the amidase family. GatA subfamily. In terms of assembly, heterotrimer of A, B and C subunits.

The catalysed reaction is L-glutamyl-tRNA(Gln) + L-glutamine + ATP + H2O = L-glutaminyl-tRNA(Gln) + L-glutamate + ADP + phosphate + H(+). Allows the formation of correctly charged Gln-tRNA(Gln) through the transamidation of misacylated Glu-tRNA(Gln) in organisms which lack glutaminyl-tRNA synthetase. The reaction takes place in the presence of glutamine and ATP through an activated gamma-phospho-Glu-tRNA(Gln). In Maridesulfovibrio salexigens (strain ATCC 14822 / DSM 2638 / NCIMB 8403 / VKM B-1763) (Desulfovibrio salexigens), this protein is Glutamyl-tRNA(Gln) amidotransferase subunit A.